The chain runs to 211 residues: ATP phosphoribosyltransferase (211 aa).

The protein belongs to the ATP phosphoribosyltransferase family. Short subfamily. In terms of assembly, heteromultimer composed of HisG and HisZ subunits.

It is found in the cytoplasm. It catalyses the reaction 1-(5-phospho-beta-D-ribosyl)-ATP + diphosphate = 5-phospho-alpha-D-ribose 1-diphosphate + ATP. The protein operates within amino-acid biosynthesis; L-histidine biosynthesis; L-histidine from 5-phospho-alpha-D-ribose 1-diphosphate: step 1/9. Catalyzes the condensation of ATP and 5-phosphoribose 1-diphosphate to form N'-(5'-phosphoribosyl)-ATP (PR-ATP). Has a crucial role in the pathway because the rate of histidine biosynthesis seems to be controlled primarily by regulation of HisG enzymatic activity. In Pseudomonas savastanoi pv. phaseolicola (strain 1448A / Race 6) (Pseudomonas syringae pv. phaseolicola (strain 1448A / Race 6)), this protein is ATP phosphoribosyltransferase.